Reading from the N-terminus, the 377-residue chain is Chaperone protein DnaJ (377 aa).

The region spanning 5–70 (DYYQILGIPK…EKRSAYDQYG (66 aa)) is the J domain. The CR-type zinc finger occupies 132–210 (GIKKEIQIPT…CHGQGRVETY (79 aa)). Residues cysteine 145, cysteine 148, cysteine 162, cysteine 165, cysteine 184, cysteine 187, cysteine 198, and cysteine 201 each coordinate Zn(2+). CXXCXGXG motif repeat units follow at residues 145 to 152 (CKTCYGSG), 162 to 169 (CSTCHGKG), 184 to 191 (CPTCHGKG), and 198 to 205 (CNLCHGQG).

The protein belongs to the DnaJ family. As to quaternary structure, homodimer. It depends on Zn(2+) as a cofactor.

Its subcellular location is the cytoplasm. Participates actively in the response to hyperosmotic and heat shock by preventing the aggregation of stress-denatured proteins and by disaggregating proteins, also in an autonomous, DnaK-independent fashion. Unfolded proteins bind initially to DnaJ; upon interaction with the DnaJ-bound protein, DnaK hydrolyzes its bound ATP, resulting in the formation of a stable complex. GrpE releases ADP from DnaK; ATP binding to DnaK triggers the release of the substrate protein, thus completing the reaction cycle. Several rounds of ATP-dependent interactions between DnaJ, DnaK and GrpE are required for fully efficient folding. Also involved, together with DnaK and GrpE, in the DNA replication of plasmids through activation of initiation proteins. The protein is Chaperone protein DnaJ of Buchnera aphidicola subsp. Acyrthosiphon pisum (strain 5A).